Consider the following 1050-residue polypeptide: Bifunctional glutamine synthetase adenylyltransferase/adenylyl-removing enzyme (1050 aa).

Positions 1–531 (MTDPLIHTRK…LHSQLFYRPL (531 aa)) are adenylyl removase. The segment at 537-1050 (NLSVDAMKLS…LDSVEARREL (514 aa)) is adenylyl transferase.

It belongs to the GlnE family. Mg(2+) is required as a cofactor.

It carries out the reaction [glutamine synthetase]-O(4)-(5'-adenylyl)-L-tyrosine + phosphate = [glutamine synthetase]-L-tyrosine + ADP. The catalysed reaction is [glutamine synthetase]-L-tyrosine + ATP = [glutamine synthetase]-O(4)-(5'-adenylyl)-L-tyrosine + diphosphate. Its function is as follows. Involved in the regulation of glutamine synthetase GlnA, a key enzyme in the process to assimilate ammonia. When cellular nitrogen levels are high, the C-terminal adenylyl transferase (AT) inactivates GlnA by covalent transfer of an adenylyl group from ATP to specific tyrosine residue of GlnA, thus reducing its activity. Conversely, when nitrogen levels are low, the N-terminal adenylyl removase (AR) activates GlnA by removing the adenylyl group by phosphorolysis, increasing its activity. The regulatory region of GlnE binds the signal transduction protein PII (GlnB) which indicates the nitrogen status of the cell. In Corynebacterium efficiens (strain DSM 44549 / YS-314 / AJ 12310 / JCM 11189 / NBRC 100395), this protein is Bifunctional glutamine synthetase adenylyltransferase/adenylyl-removing enzyme.